We begin with the raw amino-acid sequence, 118 residues long: Putative pterin-4-alpha-carbinolamine dehydratase (118 aa).

The protein belongs to the pterin-4-alpha-carbinolamine dehydratase family.

The catalysed reaction is (4aS,6R)-4a-hydroxy-L-erythro-5,6,7,8-tetrahydrobiopterin = (6R)-L-erythro-6,7-dihydrobiopterin + H2O. The polypeptide is Putative pterin-4-alpha-carbinolamine dehydratase (Pseudomonas putida (strain ATCC 700007 / DSM 6899 / JCM 31910 / BCRC 17059 / LMG 24140 / F1)).